Here is a 478-residue protein sequence, read N- to C-terminus: MKIWLSGIYEFFLRYKNIWVEVWKIRKELDHPNRKKDESEFLPAHLELIETPVSKKPRLIAYLIMLFLAVAIVLASVSKVEIVATAPGKLTFSGRSKEIKPIENTIVQEIFVKDGQFVEKGQLLVSLTALGSDADIKKTITSLSLAKLENYRYQTLLTAIEKESLPVIDLSNTEFKDSSEEDRLRIKHLIEEQYTTWQKQKTQKTLAYKRKDAEKQTISAYVRKYEGATRIEQEKLKDFRKLYQQKSLSKHELLSQENKAIEAQNELAVYRSKLNELESDLLNVKEELELITQFFKSDVLEKLKQHIENERQLQLELEKNNQRRQASMIRAPVSGTVQQLKIHTIGGVVTTAETLMIIVPEDDVLEATALIQNKDIGFVAAGQEVIIKVETFPYTRYGYITGRIKHISPDAIEQPNLGLVFNATVSIDKQALSSPDGHKIELGLGMTITAEIKTGERSVMSYLLSPLEESVTESLRER.

Over 1 to 77 the chain is Cytoplasmic; sequence MKIWLSGIYE…LAVAIVLASV (77 aa). The helical transmembrane segment at 78–98 threads the bilayer; that stretch reads SKVEIVATAPGKLTFSGRSKE. Over 99–478 the chain is Periplasmic; the sequence is IKPIENTIVQ…ESVTESLRER (380 aa).

The protein belongs to the membrane fusion protein (MFP) (TC 8.A.1) family.

The protein resides in the cell inner membrane. In terms of biological role, involved in the transport of the Leukotoxin. In Pasteurella haemolytica-like sp. (strain 5943B), this protein is Leukotoxin secretion protein D (lktD).